The sequence spans 337 residues: MFLNKYISNYSRTRAVSCAPVLSYKKCSYRNFNGLLQARFQSNNLSWSNRNRVVYKSFQPNPRDKRFQWIFGALIAGGGVYYFTHLEYVPISNRRRFNDVSLDFEKRMAQDAYKEVMSEYGDRMLPSYHPTTLYVSRVLKRIIAVSGMSDLKWELHVIRDPTPNAFVLPGGKVFVFEGILPMCKGEDGLAAVLAHETAHQVARHSAEKIAFTRAVSCIVFLAAASLDLSGQLSHFLLNFGLLLPFSRKMETEADYIGLMLMSQACFDPNAAKTLWERMDAAEGQMGKALAFASTHPSSKKRIRKIEEWLPEAQVKRETSDCYHETWPMLQSFKEVHW.

At 1–68 (MFLNKYISNY…QPNPRDKRFQ (68 aa)) the chain is on the mitochondrial matrix side. Residues 69-89 (WIFGALIAGGGVYYFTHLEYV) traverse the membrane as a helical segment. Topologically, residues 90-337 (PISNRRRFND…MLQSFKEVHW (248 aa)) are mitochondrial intermembrane. A Zn(2+)-binding site is contributed by His-195. The active site involves Glu-196. Zn(2+) is bound by residues His-199 and Glu-250. The cysteines at positions 265 and 321 are disulfide-linked.

It belongs to the peptidase M48 family. The cofactor is Zn(2+).

The protein resides in the mitochondrion inner membrane. Protease activity is induced in response to various mitochondrial stress. Its function is as follows. Protease that is part of the quality control system in the inner membrane of mitochondria. Cleaves and thereby promotes the turnover of mistranslated or misfolded membrane protein. The protein is Mitochondrial metalloendopeptidase OMA1 of Schizosaccharomyces pombe (strain 972 / ATCC 24843) (Fission yeast).